Here is a 1395-residue protein sequence, read N- to C-terminus: Adventurous-gliding motility protein Z (1395 aa).

Residues 4–122 (RVLIVESEHD…ELAALSHGIV (119 aa)) enclose the Response regulatory domain. Aspartate 48 carries the post-translational modification 4-aspartylphosphate. Disordered stretches follow at residues 137 to 172 (LNGT…AMTE), 874 to 893 (AAES…GLRS), 919 to 947 (EQHA…ARAH), 1212 to 1249 (AAES…AAKQ), 1287 to 1312 (RYKS…EDDE), and 1326 to 1395 (AAAA…ELDK). Residues 213 to 911 (EGKIQILRDE…LEQTHGQLAA (699 aa)) adopt a coiled-coil conformation. Composition is skewed to basic and acidic residues over residues 919-928 (EQHAHQESRK) and 1228-1249 (QKER…AAKQ). Composition is skewed to low complexity over residues 1291 to 1306 (KSAT…AKPA) and 1326 to 1352 (AAAA…KKAP). The segment covering 1382-1395 (EDDDWTALVDELDK) has biased composition (acidic residues).

In terms of assembly, interacts with MglA.

The protein localises to the cytoplasm. Functionally, required for adventurous-gliding motility (A motility), in response to environmental signals sensed by the frz chemosensory system. Forms ordered clusters that span the cell length and that remain stationary relative to the surface across which the cells move, serving as anchor points (focal, transient adhesion sites) that allow the bacterium to move forward. Clusters disassemble at the lagging cell pole. This is Adventurous-gliding motility protein Z (aglZ) from Myxococcus xanthus (strain DK1622).